A 417-amino-acid chain; its full sequence is Serine hydroxymethyltransferase (417 aa).

(6S)-5,6,7,8-tetrahydrofolate-binding positions include leucine 121 and 125 to 127 (GHL). An N6-(pyridoxal phosphate)lysine modification is found at lysine 229. 355–357 (SPF) is a (6S)-5,6,7,8-tetrahydrofolate binding site.

The protein belongs to the SHMT family. As to quaternary structure, homodimer. Requires pyridoxal 5'-phosphate as cofactor.

It localises to the cytoplasm. It catalyses the reaction (6R)-5,10-methylene-5,6,7,8-tetrahydrofolate + glycine + H2O = (6S)-5,6,7,8-tetrahydrofolate + L-serine. It participates in one-carbon metabolism; tetrahydrofolate interconversion. Its pathway is amino-acid biosynthesis; glycine biosynthesis; glycine from L-serine: step 1/1. In terms of biological role, catalyzes the reversible interconversion of serine and glycine with tetrahydrofolate (THF) serving as the one-carbon carrier. This reaction serves as the major source of one-carbon groups required for the biosynthesis of purines, thymidylate, methionine, and other important biomolecules. Also exhibits THF-independent aldolase activity toward beta-hydroxyamino acids, producing glycine and aldehydes, via a retro-aldol mechanism. The polypeptide is Serine hydroxymethyltransferase (Enterobacter sp. (strain 638)).